The primary structure comprises 235 residues: Caffeoyl-CoA O-methyltransferase (235 aa).

Lysine 8 contacts substrate. S-adenosyl-L-methionine is bound by residues valine 52, glutamate 74, 76–77, serine 82, aspartate 100, and alanine 129; that span reads GV. Aspartate 151 contacts substrate. Position 151 (aspartate 151) interacts with a divalent metal cation. Aspartate 153 is an S-adenosyl-L-methionine binding site. A divalent metal cation contacts are provided by aspartate 177 and asparagine 178.

It belongs to the class I-like SAM-binding methyltransferase superfamily. Cation-dependent O-methyltransferase family. CCoAMT subfamily. A divalent metal cation is required as a cofactor.

It carries out the reaction (E)-caffeoyl-CoA + S-adenosyl-L-methionine = (E)-feruloyl-CoA + S-adenosyl-L-homocysteine + H(+). It participates in aromatic compound metabolism; phenylpropanoid biosynthesis. In terms of biological role, methylates caffeoyl-CoA to feruloyl-CoA and 5-hydroxyferuloyl-CoA to sinapoyl-CoA. Plays a role in the synthesis of feruloylated polysaccharides. Involved in the reinforcement of the plant cell wall. Also involved in the responding to wounding or pathogen challenge by the increased formation of cell wall-bound ferulic acid polymers. This chain is Caffeoyl-CoA O-methyltransferase, found in Populus kitakamiensis (Aspen).